We begin with the raw amino-acid sequence, 1093 residues long: ATP-dependent helicase/deoxyribonuclease subunit B (1093 aa).

This sequence belongs to the helicase family. AddB/RexB type 2 subfamily. As to quaternary structure, heterodimer of AddA and RexB. Mg(2+) is required as a cofactor.

Functionally, the heterodimer acts as both an ATP-dependent DNA helicase and an ATP-dependent, dual-direction single-stranded exonuclease. Recognizes the chi site generating a DNA molecule suitable for the initiation of homologous recombination. This subunit has 5' -&gt; 3' nuclease activity but not helicase activity. The chain is ATP-dependent helicase/deoxyribonuclease subunit B from Streptococcus sanguinis (strain SK36).